Here is a 1034-residue protein sequence, read N- to C-terminus: Condensin complex subunit 3 (1034 aa).

HEAT repeat units follow at residues 95–132 (SPVN…NLPE), 139–176 (DLFD…PSDP), 178–213 (CPVS…SLPK), 242–279 (LTIA…QYSE), 281–317 (DVLD…LVQN), 439–476 (TSLI…PIVT), and 618–655 (DFAR…LFGM). Positions 663–672 (TNPDDSQCKA) are enriched in polar residues. Residues 663–693 (TNPDDSQCKAQENADEDISEQEKPGSVDENL) form a disordered region. HEAT repeat units follow at residues 703–740 (ATVN…SGRL), 785–823 (CFAE…DLTR), and 878–915 (ENST…SGRE). The segment covering 909-949 (QLRSGREEHRVSKETEPQVSKETEDRTNLQENEEGKQKDEA) has biased composition (basic and acidic residues). The tract at residues 909 to 1034 (QLRSGREEHR…LSKLLNEEAN (126 aa)) is disordered. Residues 964–984 (RGKATKGRRKGPAAAATRRKA) are compositionally biased toward basic residues. The span at 985–999 (SKAEEAEAEMERQEE) shows a compositional bias: basic and acidic residues.

It belongs to the CND3 (condensin subunit 3) family. Component of the condensin complex, which contains the XCAP-E/SMC2 and XCAP-C/SMC4 heterodimer, and three non SMC subunits that probably regulate the complex: XCAP-H/NCAPH, XCAP-D2/NCAPD2 and XCAP-G/NCAPG. In terms of processing, phosphorylated by cdk1. Its phosphorylation, as well as that of XCAP-D2 and XCAP-H subunits, activates the condensin complex and is required for chromosome condensation.

Its subcellular location is the nucleus. It is found in the cytoplasm. The protein localises to the chromosome. Its function is as follows. Regulatory subunit of the condensin complex, a complex required for conversion of interphase chromatin into mitotic-like condense chromosomes. The condensin complex probably introduces positive supercoils into relaxed DNA in the presence of type I topoisomerases and converts nicked DNA into positive knotted forms in the presence of type II topoisomerase. In Xenopus laevis (African clawed frog), this protein is Condensin complex subunit 3 (ncapg).